The sequence spans 228 residues: Cytochrome c oxidase subunit 2 (228 aa).

Residues Met-1–Ser-14 are Mitochondrial intermembrane-facing. Residues Pro-15 to Met-45 form a helical membrane-spanning segment. Over Leu-46–Gln-59 the chain is Mitochondrial matrix. A helical membrane pass occupies residues Glu-60–Met-87. The Mitochondrial intermembrane segment spans residues Asp-88–Thr-228. Residues His-161, Cys-196, Glu-198, Cys-200, His-204, and Met-207 each coordinate Cu cation. Glu-198 contributes to the Mg(2+) binding site. At Tyr-218 the chain carries Phosphotyrosine.

Belongs to the cytochrome c oxidase subunit 2 family. In terms of assembly, component of the cytochrome c oxidase (complex IV, CIV), a multisubunit enzyme composed of 14 subunits. The complex is composed of a catalytic core of 3 subunits MT-CO1, MT-CO2 and MT-CO3, encoded in the mitochondrial DNA, and 11 supernumerary subunits COX4I, COX5A, COX5B, COX6A, COX6B, COX6C, COX7A, COX7B, COX7C, COX8 and NDUFA4, which are encoded in the nuclear genome. The complex exists as a monomer or a dimer and forms supercomplexes (SCs) in the inner mitochondrial membrane with NADH-ubiquinone oxidoreductase (complex I, CI) and ubiquinol-cytochrome c oxidoreductase (cytochrome b-c1 complex, complex III, CIII), resulting in different assemblies (supercomplex SCI(1)III(2)IV(1) and megacomplex MCI(2)III(2)IV(2)). Found in a complex with TMEM177, COA6, COX18, COX20, SCO1 and SCO2. Interacts with TMEM177 in a COX20-dependent manner. Interacts with COX20. Interacts with COX16. It depends on Cu cation as a cofactor.

Its subcellular location is the mitochondrion inner membrane. It catalyses the reaction 4 Fe(II)-[cytochrome c] + O2 + 8 H(+)(in) = 4 Fe(III)-[cytochrome c] + 2 H2O + 4 H(+)(out). In terms of biological role, component of the cytochrome c oxidase, the last enzyme in the mitochondrial electron transport chain which drives oxidative phosphorylation. The respiratory chain contains 3 multisubunit complexes succinate dehydrogenase (complex II, CII), ubiquinol-cytochrome c oxidoreductase (cytochrome b-c1 complex, complex III, CIII) and cytochrome c oxidase (complex IV, CIV), that cooperate to transfer electrons derived from NADH and succinate to molecular oxygen, creating an electrochemical gradient over the inner membrane that drives transmembrane transport and the ATP synthase. Cytochrome c oxidase is the component of the respiratory chain that catalyzes the reduction of oxygen to water. Electrons originating from reduced cytochrome c in the intermembrane space (IMS) are transferred via the dinuclear copper A center (CU(A)) of subunit 2 and heme A of subunit 1 to the active site in subunit 1, a binuclear center (BNC) formed by heme A3 and copper B (CU(B)). The BNC reduces molecular oxygen to 2 water molecules using 4 electrons from cytochrome c in the IMS and 4 protons from the mitochondrial matrix. The chain is Cytochrome c oxidase subunit 2 (MT-CO2) from Sus scrofa (Pig).